The primary structure comprises 255 residues: Homeobox protein Hox-D4 (255 aa).

The segment at 31–127 is disordered; sequence EQGADYYGGG…PKQPPSGTAL (97 aa). Positions 94–107 are enriched in pro residues; that stretch reads EPCPAPPAPPPAPL. The short motif at 133 to 138 is the Antp-type hexapeptide element; it reads VYPWMK. The homeobox DNA-binding region spans 154-213; it reads PKRSRTAYTRQQVLELEKEFHFNRYLTRRRRIEIAHTLCLSERQIKIWFQNRRMKWKKDH. The tract at residues 212-255 is disordered; that stretch reads DHKLPNTKGRSSSSSSSSSCSSSVAPSQHLQPMAKDHHTDLTTL. A compositionally biased stretch (low complexity) spans 222–234; that stretch reads SSSSSSSSSCSSS. Basic and acidic residues predominate over residues 245–255; sequence AKDHHTDLTTL.

The protein belongs to the Antp homeobox family. Deformed subfamily. In terms of assembly, forms a DNA-binding heterodimer with transcription factor PBX1.

It is found in the nucleus. Its function is as follows. Sequence-specific transcription factor which is part of a developmental regulatory system that provides cells with specific positional identities on the anterior-posterior axis. The chain is Homeobox protein Hox-D4 (HOXD4) from Homo sapiens (Human).